Consider the following 798-residue polypeptide: MLISLNWLKQYVDIKESIDEIANALTMIGQEVEAIDIQGKDLDNVVIGQIVEFDKHPNSDRLTLLKVNVGGEEPLQIICGAKNHKLNDKVVVAKIGAVLPGNFKIKKSKIRDVESYGMLCSEAELGFTKESEGIIILPEDAPIGTEYREYMNLNDVIFELEITPNRPDCLSHIGIAREVAAYYNRKVKYPMIEITETIESINTMVKVDIEDKDRCKRYMGRVIKNVKVQESPDWLKSRIRAMGLNPINNIVDITNFVMFEYNQPMHAFDLDKLEGNITIRAAKKNEEITTLDGVDRVLKNGELVIADDEKAIAIAGVIGGQNTQIDNETKNIFVEVAYFTPENIRKTSRELGIFTDSAYRNERGMDVENLSNVMARAVSLIAEVAGGDVLSEVIDKYVEKPQRAEISLNLEKLNKFIGKNLTYDEVGKILTHLDIELKPLGEGTMLLIPPSYRADLTRPADIYEEVIRMYGFDNIEAKIPVMSIESGEENINFKMPRIVRGILKELGLNEVINYSFIPKFTKELFNFGDEVIEIKNPLSEDMAIMRPTLLYSLITNIRDNINRNQTDLKLFEISKTFKNLGAEKDGLAIEDLKVGIILSGREDKNLWNQSKTDYNFYDLKGYLEFLLERLNVTKYSLTRLENSNFHPGASAEIKIGEDIIGVFGELHPNLVNYFGIKREKLFFAELNLTKLLKYIKIKVNYESISKYPEVLRDLAITLDRDILVGDMIKEIKKKVALIEKIDIFDVYSGDKIDKDKKSVAMSIILRDKNRTLTDGDIDTAMNTILELIKDKYNGEIRK.

One can recognise a tRNA-binding domain in the interval 39–148 (GKDLDNVVIG…EDAPIGTEYR (110 aa)). The 77-residue stretch at 401-477 (PQRAEISLNL…RMYGFDNIEA (77 aa)) folds into the B5 domain. Mg(2+) contacts are provided by aspartate 455, aspartate 461, glutamate 464, and glutamate 465. Residues 705 to 797 (SKYPEVLRDL…IKDKYNGEIR (93 aa)) enclose the FDX-ACB domain.

The protein belongs to the phenylalanyl-tRNA synthetase beta subunit family. Type 1 subfamily. As to quaternary structure, tetramer of two alpha and two beta subunits. Mg(2+) is required as a cofactor.

Its subcellular location is the cytoplasm. It catalyses the reaction tRNA(Phe) + L-phenylalanine + ATP = L-phenylalanyl-tRNA(Phe) + AMP + diphosphate + H(+). The protein is Phenylalanine--tRNA ligase beta subunit of Fusobacterium nucleatum subsp. nucleatum (strain ATCC 25586 / DSM 15643 / BCRC 10681 / CIP 101130 / JCM 8532 / KCTC 2640 / LMG 13131 / VPI 4355).